Consider the following 156-residue polypeptide: Snaclec A2 (156 aa).

An N-terminal signal peptide occupies residues 1 to 23 (MGRLISVSFGLLVVFLSLSGTGA). Cystine bridges form between C27/C38, C55/C154, and C129/C146. A C-type lectin domain is found at 34 to 155 (HEGHCYKVFN…CGQPYRFTCE (122 aa)).

This sequence belongs to the snaclec family. As to quaternary structure, heterodimer; disulfide-linked. In terms of tissue distribution, expressed by the venom gland.

It is found in the secreted. Interferes with one step of hemostasis (modulation of platelet aggregation, or coagulation cascade, for example). The protein is Snaclec A2 of Macrovipera lebetinus (Levantine viper).